Reading from the N-terminus, the 152-residue chain is uncharacterized protein (152 aa).

Helical transmembrane passes span 13–33 (LLWF…LLFF), 38–58 (LIVE…SLFM), and 69–89 (WVIF…FFVI).

It is found in the cell membrane. This is an uncharacterized protein from Mycoplasma pneumoniae (strain ATCC 29342 / M129 / Subtype 1) (Mycoplasmoides pneumoniae).